A 285-amino-acid polypeptide reads, in one-letter code: Neuralized-like protein 2 (285 aa).

Residues 1–28 (MADPSEHVGLGGPRSPARPEPPPTRFHQ) form a disordered region. In terms of domain architecture, NHR spans 23-244 (PTRFHQVHGA…STKSVRLVQL (222 aa)). Positions 250 to 285 (SLQTLCRLVIHKRVVHRLAIDVLHLPKGLKDFCKYE) constitute an SOCS box domain.

As to quaternary structure, probable component the ECS(NEURL2) E3 ubiquitin-protein ligase complex consisting of ELOB/Elongin B, ELOC/Elongin C, CUL5, RBX1 and NEURL2. Interacts with CTNNB1. As to expression, expressed specifically in skeletal and cardiac muscles.

The protein resides in the cytoplasm. It participates in protein modification; protein ubiquitination. Plays an important role in the process of myofiber differentiation and maturation. Probable substrate-recognition component of a SCF-like ECS (Elongin BC-CUL2/5-SOCS-box protein) E3 ubiquitin-protein ligase complex, which mediates the ubiquitination of proteins. Probably contributes to catalysis through recognition and positioning of the substrate and the ubiquitin-conjugating enzyme. During myogenesis, controls the ubiquitination and degradation of the specific pool of CTNNB1/beta-catenin located at the sarcolemma. The polypeptide is Neuralized-like protein 2 (Neurl2) (Mus musculus (Mouse)).